The sequence spans 303 residues: WD repeat-containing protein 38 (303 aa).

WD repeat units lie at residues 24–63, 66–105, 108–147, 150–189, 195–233, 236–277, and 279–303; these read QHHGEVNCSAFSPDGRTLLTASDDGCVYVWGTKSGRLLWR, GHRGPVKSCCFSPDGRLIASSSSDHSIRLWDVARSKCLHV, GHQRSVETVSFSPDSKQLASGGWDKRAIVWEVQSGRRVHL, GHCDSIQSSDFSPTSDSLATGSWDSTVHIWDLRASTPVVS, GHTGNISCLCYSASGLLASGSWDKTICVWKPTTNNLPLQ, GHTI…ETLK, and MLDVAHACIFTPDGKLLVSGAAVTR.

The polypeptide is WD repeat-containing protein 38 (Wdr38) (Mus musculus (Mouse)).